Reading from the N-terminus, the 957-residue chain is Plasma membrane ATPase 1 (957 aa).

The Cytoplasmic portion of the chain corresponds to 1–66; that stretch reads MGEEKPEVLD…EKKDSKLLKF (66 aa). Residues 67–86 traverse the membrane as a helical segment; it reads LGFMWNPLSWVMEAAAIMAI. Topologically, residues 87–98 are extracellular; it reads ALANGGGKPPDW. Residues 99-119 form a helical membrane-spanning segment; the sequence is QDFVGIITLLIINSTISFIEE. Topologically, residues 120 to 248 are cytoplasmic; that stretch reads NNAGNAAAAL…GHFQKVLTAI (129 aa). A helical membrane pass occupies residues 249-269; that stretch reads GNFCICSIAVGMIIEIIVMYP. Residues 270–279 lie on the Extracellular side of the membrane; the sequence is IQHRAYRPGI. Residues 280-301 form a helical membrane-spanning segment; sequence DNLLVLLIGGIPIAMPTVLSVT. The Cytoplasmic portion of the chain corresponds to 302 to 648; sequence MAIGSHRLAQ…TSRAIFQRMK (347 aa). Aspartate 334 serves as the catalytic 4-aspartylphosphate intermediate. Mg(2+)-binding residues include aspartate 593 and aspartate 597. Residues 649-670 form a helical membrane-spanning segment; the sequence is NYTIYAVSITIRIVLGFMLLAL. Residues 671–675 lie on the Extracellular side of the membrane; that stretch reads IWKFD. The helical transmembrane segment at 676-698 threads the bilayer; it reads FPPFMVLIIAILNDGTIMTISKD. Residues 699-714 lie on the Cytoplasmic side of the membrane; sequence RVKPSPLPDSWKLAEI. Residues 715-735 form a helical membrane-spanning segment; sequence FTTGIVLGGYLAMMTVIFFWA. The Extracellular portion of the chain corresponds to 736–760; the sequence is AYKTNFFPHVFGVSTLEKTATDDFR. The chain crosses the membrane as a helical span at residues 761–781; that stretch reads KLASAIYLQVSIISQALIFVT. Residues 782 to 793 lie on the Cytoplasmic side of the membrane; sequence RSRSWSFVERPG. A helical transmembrane segment spans residues 794–814; that stretch reads FLLVIAFVIAQLVATLIAVYA. Residues 815 to 823 are Extracellular-facing; the sequence is NWSFAAIEG. Residues 824–844 traverse the membrane as a helical segment; sequence IGWGWAGVIWIYNLVFYIPLD. The Cytoplasmic portion of the chain corresponds to 845–957; sequence IIKFFIRYAL…IETIQQAYTV (113 aa).

Belongs to the cation transport ATPase (P-type) (TC 3.A.3) family. Type IIIA subfamily. In terms of tissue distribution, expressed in roots, stems, leaves from both vegetative and flowering plants, and flowers at early and late stages of development with highest expression levels found in flowers and stem.

The protein resides in the cell membrane. It carries out the reaction ATP + H2O + H(+)(in) = ADP + phosphate + 2 H(+)(out). Functionally, the plasma membrane ATPase of plants and fungi is a hydrogen ion pump. The proton gradient it generates drives the active transport of nutrients by H(+)-symport. The resulting external acidification and/or internal alkinization may mediate growth responses. The protein is Plasma membrane ATPase 1 (PMA1) of Nicotiana plumbaginifolia (Leadwort-leaved tobacco).